Reading from the N-terminus, the 286-residue chain is ATP synthase gamma chain (286 aa).

This sequence belongs to the ATPase gamma chain family. F-type ATPases have 2 components, CF(1) - the catalytic core - and CF(0) - the membrane proton channel. CF(1) has five subunits: alpha(3), beta(3), gamma(1), delta(1), epsilon(1). CF(0) has three main subunits: a, b and c.

The protein resides in the cell inner membrane. In terms of biological role, produces ATP from ADP in the presence of a proton gradient across the membrane. The gamma chain is believed to be important in regulating ATPase activity and the flow of protons through the CF(0) complex. This is ATP synthase gamma chain from Fuscovulum blasticum (Rhodobacter blasticus).